We begin with the raw amino-acid sequence, 379 residues long: Queuine tRNA-ribosyltransferase (379 aa).

Asp-94 serves as the catalytic Proton acceptor. Residues Asp-94–Phe-98, Asp-148, Gln-191, and Gly-218 each bind substrate. The interval Gly-249–Ser-255 is RNA binding. Residue Asp-268 is the Nucleophile of the active site. Residues Thr-273 to Arg-277 form an RNA binding; important for wobble base 34 recognition region. 4 residues coordinate Zn(2+): Cys-306, Cys-308, Cys-311, and His-337.

This sequence belongs to the queuine tRNA-ribosyltransferase family. As to quaternary structure, homodimer. Within each dimer, one monomer is responsible for RNA recognition and catalysis, while the other monomer binds to the replacement base PreQ1. Zn(2+) is required as a cofactor.

The catalysed reaction is 7-aminomethyl-7-carbaguanine + guanosine(34) in tRNA = 7-aminomethyl-7-carbaguanosine(34) in tRNA + guanine. Its pathway is tRNA modification; tRNA-queuosine biosynthesis. In terms of biological role, catalyzes the base-exchange of a guanine (G) residue with the queuine precursor 7-aminomethyl-7-deazaguanine (PreQ1) at position 34 (anticodon wobble position) in tRNAs with GU(N) anticodons (tRNA-Asp, -Asn, -His and -Tyr). Catalysis occurs through a double-displacement mechanism. The nucleophile active site attacks the C1' of nucleotide 34 to detach the guanine base from the RNA, forming a covalent enzyme-RNA intermediate. The proton acceptor active site deprotonates the incoming PreQ1, allowing a nucleophilic attack on the C1' of the ribose to form the product. After dissociation, two additional enzymatic reactions on the tRNA convert PreQ1 to queuine (Q), resulting in the hypermodified nucleoside queuosine (7-(((4,5-cis-dihydroxy-2-cyclopenten-1-yl)amino)methyl)-7-deazaguanosine). The polypeptide is Queuine tRNA-ribosyltransferase (Listeria monocytogenes serovar 1/2a (strain ATCC BAA-679 / EGD-e)).